A 220-amino-acid polypeptide reads, in one-letter code: Ribosomal RNA large subunit methyltransferase E (220 aa).

S-adenosyl-L-methionine contacts are provided by glycine 64, tryptophan 66, aspartate 92, aspartate 108, and aspartate 133. The active-site Proton acceptor is the lysine 173.

The protein belongs to the class I-like SAM-binding methyltransferase superfamily. RNA methyltransferase RlmE family.

Its subcellular location is the cytoplasm. The enzyme catalyses uridine(2552) in 23S rRNA + S-adenosyl-L-methionine = 2'-O-methyluridine(2552) in 23S rRNA + S-adenosyl-L-homocysteine + H(+). In terms of biological role, specifically methylates the uridine in position 2552 of 23S rRNA at the 2'-O position of the ribose in the fully assembled 50S ribosomal subunit. In Acidovorax sp. (strain JS42), this protein is Ribosomal RNA large subunit methyltransferase E.